We begin with the raw amino-acid sequence, 530 residues long: Chaperone Ric-8A (530 aa).

A Phosphoserine modification is found at Ser-435. Phosphothreonine is present on residues Thr-440 and Thr-442. Residues Ser-501, Ser-522, Ser-523, and Ser-527 each carry the phosphoserine modification.

The protein belongs to the synembryn family. As to quaternary structure, interacts with GDP-bound G alpha proteins GNAI1, GNAO1 and GNAQ, and with GNA13 with lower affinity. Does not interact with G-alpha proteins when they are in complex with subunits beta and gamma. Interacts (via C-terminus) with RGS14; the interaction stimulates the dissociation of the complex between RGS14 and the active GTP-bound form of GNAI1. Interacts with NCS1; interaction is favored in the absence of Ca(2+) and myristoylation of NCS1 is not required. In terms of tissue distribution, expressed in neurons and neurites of the CA1 and CA2 subregions of the hippocampus (at protein level). In adult brain, it is expressed in the neocortex, hippocampus and cerebellum as well as in the pineal gland and ependymal layer.

It is found in the cytoplasm. The protein localises to the cell cortex. Functionally, chaperone that specifically binds and folds nascent G alpha proteins prior to G protein heterotrimer formation, promoting their stability and activity: folds GNAI1, GNAO1, GNA13 and GNAQ. Does not fold G(s) G-alpha proteins GNAS nor GNAL. Also acts as a guanine nucleotide exchange factor (GEF) for G alpha proteins by stimulating exchange of bound GDP for free GTP. Involved in regulation of microtubule pulling forces during mitotic movement of chromosomes by stimulating G(i)-alpha protein (GNAI1), possibly leading to release G(i)-alpha-GTP and NuMA proteins from the NuMA-GPSM2-G(i)-alpha-GDP complex. Also acts as an activator for G(q)-alpha (GNAQ) protein by enhancing the G(q)-coupled receptor-mediated ERK activation. This Mus musculus (Mouse) protein is Chaperone Ric-8A.